The sequence spans 28 residues: Omega-agatoxin-Aa2a (28 aa).

The protein belongs to the neurotoxin 04 (omega-agtx) family. 03 (type II/III omega-agtx) subfamily. In terms of tissue distribution, expressed by the venom gland.

It localises to the secreted. In terms of biological role, omega-agatoxin are antagonist of voltage-gated calcium channels. They block insect neuromuscular transmission presynaptically. Potent blocker of N-type calcium channels (Cav2.2/CACNA1B). This chain is Omega-agatoxin-Aa2a, found in Agelenopsis aperta (North American funnel-web spider).